We begin with the raw amino-acid sequence, 228 residues long: UPF0173 metal-dependent hydrolase lin1612 (228 aa).

It belongs to the UPF0173 family.

The polypeptide is UPF0173 metal-dependent hydrolase lin1612 (Listeria innocua serovar 6a (strain ATCC BAA-680 / CLIP 11262)).